The sequence spans 259 residues: Undecaprenyl-diphosphatase 4 (259 aa).

8 helical membrane-spanning segments follow: residues 1-21, 39-59, 71-91, 99-119, 133-153, 174-194, 208-228, and 239-259; these read MNWLEAFILGIIQGLTEFLPI, AGLFLDTMLHIGTLLAVFIYY, FSKLMLLLIVGTIPAVVIGLL, ISKTGITIGWEFLVTGFFLYM, ITYKDAFIIGSFQAAAIFPAI, AYFSFLLSTPAIVGAIILQFV, SLIVGTLSAAFFGYIAVSWMI, and FAYYVWGLGILILTLQFTDVF.

It belongs to the UppP family.

It localises to the cell membrane. It carries out the reaction di-trans,octa-cis-undecaprenyl diphosphate + H2O = di-trans,octa-cis-undecaprenyl phosphate + phosphate + H(+). Functionally, catalyzes the dephosphorylation of undecaprenyl diphosphate (UPP). Confers resistance to bacitracin. The chain is Undecaprenyl-diphosphatase 4 from Bacillus cereus (strain ZK / E33L).